Consider the following 349-residue polypeptide: Selenide, water dikinase (349 aa).

Cys-17 is a catalytic residue. Residues Lys-20 and 48–50 each bind ATP; that span reads YFD. Position 51 (Asp-51) interacts with Mg(2+). ATP contacts are provided by residues Asp-68, Asp-91, and 139-141; that span reads GHS. Asp-91 lines the Mg(2+) pocket. Mg(2+) is bound at residue Asp-229.

It belongs to the selenophosphate synthase 1 family. Class I subfamily. Homodimer. Requires Mg(2+) as cofactor.

It catalyses the reaction hydrogenselenide + ATP + H2O = selenophosphate + AMP + phosphate + 2 H(+). In terms of biological role, synthesizes selenophosphate from selenide and ATP. This Nitrosomonas eutropha (strain DSM 101675 / C91 / Nm57) protein is Selenide, water dikinase.